The following is a 648-amino-acid chain: MGTNPVHGLPFLPGSSFTDSTKTAFHRSQTLNYRNGYAVVRRPTMGIGGDRLHYNQLSQAELDELANKAPILTYGPLKQAPLAEFVPAHVAFDKKVLKFSAYFQEDVPISMEEHYRIRHVNIYYYLEDDSMSVIEPVVENSGIPQGKLIKRQRFTKNDMGDHYHWKDLNRGINLTVYGKTFRIVDCDRFTQDFLESQGIELNPSEKIPLDPYTQLRKEPVRKYVTPSDFDQLKQFLTFDKQVLRFYAIWDDTDSLFGECRHYIIHYYLMDDTVEIREVHERNNGRDPFPLLMNRQRMPKVLVENAKNFPKCVLEISDQEVLEWYTAKDFIVGKPLTILGRTFFIYDCDPFTRQFYKDKFGMPDLPPVDVTKKEPPPVKQELPPYNGYGLIEDSAQNCFALIPKAPRKDVVKMLMNDNKVLRYLAALESPIPEDKDRRFVFSYFLATDMISIFEPPVRNSGIIGGKFLGRTKVVKSFSPVDNPIYYSPSDFFIGAVIEVFGHRFVILDTDEYVLKYMESNASQYSPEALASIQNRIQKPELPAPELESKQATGEPMVQGTEESKVQDLDALIDQIHMHLKYNSYKENLRETFQMYDKDESGYVDRETFFKICETLNVPVDDSLIKELIRLCTHGEGRINYYNFVRAFSN.

Positions 1–45 (MGTNPVHGLPFLPGSSFTDSTKTAFHRSQTLNYRNGYAVVRRPTM) are required for its localization in the mitotic spindle and interaction with alpha-tubulin. 3 consecutive DM10 domains span residues 93-198 (DKKV…ESQG), 239-359 (DKQV…KDKF), and 416-520 (DNKV…ESNA). The EF-hand domain maps to 582–617 (SYKENLRETFQMYDKDESGYVDRETFFKICETLNVP).

In terms of assembly, microtubule inner protein component of sperm flagellar doublet microtubules. Interacts with the C-terminus of CACNA1E. Interacts with alpha-tubulin. In terms of tissue distribution, expressed in adult brain including hippocampus, cerebellum, cerebral cortex, thalamus, hypothalamus, amygdala and upper brainstem. Expressed in soma and dentrites of pyramidal neurons of the hippocampal CA1 region, pyramidal neurons of the cerebral cortex and Purkinje cells of cerebellum. Highly expressed in testis, trachea, and oviduct, moderately in lung, and slightly in brain. Highly expressed in sperm flagella and tracheal cilia (at protein level).

The protein resides in the cytoplasm. Its subcellular location is the cytoskeleton. It localises to the cilium axoneme. It is found in the flagellum axoneme. The protein localises to the microtubule organizing center. The protein resides in the centrosome. Its subcellular location is the spindle. It localises to the spindle pole. Microtubule inner protein (MIP) part of the dynein-decorated doublet microtubules (DMTs) in cilia axoneme, which is required for motile cilia beating. Microtubule-associated protein which regulates cell division and neuronal migration during cortical development. Necessary for radial and tangential cell migration during brain development, possibly acting as a regulator of cell morphology and process formation during migration. May enhance calcium influx through CACNA1E and stimulate programmed cell death. Overexpression of EFHC1 in hippocampal primary culture neurons induced apoptosis. This is EF-hand domain-containing protein 1 (Efhc1) from Mus musculus (Mouse).